Reading from the N-terminus, the 345-residue chain is MYDTIVIGAGQAGISIGYYLKQSDQKFIILDKSHEVGESWKDRYDSLVLFTSRMYSSLPGMHLEGEKHGFPSKNEIVAYLKKYVKKFEIPIQLRTEVISVLKIKNYFLIKTNREEYQTKNLVIATGPFHTPNIPSISKDLSDNINQLHSSQYKNSKQLAYGNVLVVGGGNSGAQIAVELSKERVTYLACSNKLVYFPLMIGKRSIFWWFDKLGVLHASHTSIVGKFIQKKGDPVFGHELKHAIKQKEIILKKRVIAAKQNEIIFKDSSTLEVNNIIWATGFRNPLCWINIKGVLDQEGRIIHHRGVSPVEGLYFIGLPWQHKRGSALLQGVGNDAEYIVKQMNGE.

It is found in the cell membrane. In terms of biological role, involved in potassium and divalent cation transport. Enhances the transport activity of the cation/potassium transporter CzcD. This is an uncharacterized protein from Bacillus subtilis (strain 168).